The chain runs to 199 residues: Small ribosomal subunit protein uS4 (199 aa).

Residues 91–154 (SRLDNLVYRM…RGLQLIKDAL (64 aa)) enclose the S4 RNA-binding domain.

Belongs to the universal ribosomal protein uS4 family. Part of the 30S ribosomal subunit. Contacts protein S5. The interaction surface between S4 and S5 is involved in control of translational fidelity.

In terms of biological role, one of the primary rRNA binding proteins, it binds directly to 16S rRNA where it nucleates assembly of the body of the 30S subunit. Its function is as follows. With S5 and S12 plays an important role in translational accuracy. The chain is Small ribosomal subunit protein uS4 from Brevibacillus brevis (strain 47 / JCM 6285 / NBRC 100599).